Reading from the N-terminus, the 1060-residue chain is FACT complex subunit SPT16 (1060 aa).

Residues 458 to 490 (FNDDNETQKENNNNNNKRPGLSQTSNTTALKLE) form a disordered region. Residues 478–490 (LSQTSNTTALKLE) show a composition bias toward polar residues. The stretch at 508 to 532 (NADDANSEKLRQEIQIKLHEKRLQE) forms a coiled coil. The interval 977–1060 (QGESDEEEES…AKADRNSGFD (84 aa)) is disordered. 2 stretches are compositionally biased toward acidic residues: residues 979 to 990 (ESDEEEESDEES) and 997 to 1044 (EDPQ…EDWD). The segment covering 1045–1060 (ALERKAAKADRNSGFD) has biased composition (basic and acidic residues).

This sequence belongs to the peptidase M24 family. SPT16 subfamily. In terms of assembly, forms a stable heterodimer with POB3. The SPT16-POB3 dimer weakly associates with multiple molecules of NHP6 to form the FACT complex.

It is found in the nucleus. Its subcellular location is the chromosome. Functionally, component of the FACT complex, a general chromatin factor that acts to reorganize nucleosomes. The FACT complex is involved in multiple processes that require DNA as a template such as mRNA elongation, DNA replication and DNA repair. During transcription elongation the FACT complex acts as a histone chaperone that both destabilizes and restores nucleosomal structure. It facilitates the passage of RNA polymerase II and transcription by promoting the dissociation of one histone H2A-H2B dimer from the nucleosome, then subsequently promotes the reestablishment of the nucleosome following the passage of RNA polymerase II. In Candida albicans (strain SC5314 / ATCC MYA-2876) (Yeast), this protein is FACT complex subunit SPT16 (CDC68).